The following is a 276-amino-acid chain: Eukaryotic translation initiation factor 3 subunit G (276 aa).

S148 carries the post-translational modification Phosphoserine. The RRM domain maps to 195–274 (TTLKISQLNS…LILHLEWSKK (80 aa)).

Belongs to the eIF-3 subunit G family. As to quaternary structure, component of the eukaryotic translation initiation factor 3 (eIF-3) complex.

The protein resides in the cytoplasm. RNA-binding component of the eukaryotic translation initiation factor 3 (eIF-3) complex, which is involved in protein synthesis of a specialized repertoire of mRNAs and, together with other initiation factors, stimulates binding of mRNA and methionyl-tRNAi to the 40S ribosome. The eIF-3 complex specifically targets and initiates translation of a subset of mRNAs involved in cell proliferation. This subunit can bind 18S rRNA. This Debaryomyces hansenii (strain ATCC 36239 / CBS 767 / BCRC 21394 / JCM 1990 / NBRC 0083 / IGC 2968) (Yeast) protein is Eukaryotic translation initiation factor 3 subunit G.